Here is a 196-residue protein sequence, read N- to C-terminus: Signaling threshold-regulating transmembrane adapter 1 (196 aa).

Positions 1 to 24 (MNQADPRLRAVCLWTLTSAAMSRG) are cleaved as a signal peptide. The Extracellular portion of the chain corresponds to 25–40 (DNCTDLLALGIPSITQ). Asn26 is a glycosylation site (N-linked (GlcNAc...) asparagine). Residues 41–61 (AWGLWVLLGAVTLLFLISLAA) form a helical membrane-spanning segment. Residues 62 to 196 (HLSQWTRGRS…AYANSQPAAS (135 aa)) are Cytoplasmic-facing. 2 positions are modified to phosphoserine: Ser80 and Ser83. At Tyr90 the chain carries Phosphotyrosine. The tract at residues 90–93 (YGNL) is interaction with GRB2. Residue Ser102 is modified to Phosphoserine. Position 127 is a phosphotyrosine (Tyr127). Residues 132–167 (LRPPQGRIPGPGTPVKYSEVVLDSEPKSQASGPEPE) are disordered. Thr144 is subject to Phosphothreonine. Residues 146–151 (VKYSEV) are interaction with PTPN11. Tyr148 and Tyr169 each carry phosphotyrosine. The interaction with CSK stretch occupies residues 169–172 (YASV). The residue at position 182 (Ser182) is a Phosphoserine. Tyr188 carries the post-translational modification Phosphotyrosine. Residues 188-191 (YANS) form an interaction with GRB2 region.

Homodimer; disulfide-linked. When phosphorylated, interacts with PTPN11/SHP2, GRB2 and CSK. Phosphorylated on tyrosines by LCK, FYN or ZAP70 upon TCR activation; which leads to the recruitment of PTPN11, GRB2 and CSK. In terms of tissue distribution, specifically expressed in T- and B-cells. Present in plasma cells but not in germinal center B-cells (at protein level). Expressed in T- and B-cell lymphoma.

It localises to the cell membrane. Its function is as follows. Negatively regulates TCR (T-cell antigen receptor)-mediated signaling in T-cells. Involved in positive selection of T-cells. This Homo sapiens (Human) protein is Signaling threshold-regulating transmembrane adapter 1 (SIT1).